Here is a 338-residue protein sequence, read N- to C-terminus: Ketol-acid reductoisomerase (NADP(+)) (338 aa).

The KARI N-terminal Rossmann domain occupies 1-181; sequence MKVYYDSDAD…GGGRAGIIET (181 aa). NADP(+)-binding positions include 24–27, Arg-47, Ser-50, Ser-52, and 82–85; these read YGSQ and DEHQ. His-107 is an active-site residue. Gly-133 contacts NADP(+). Residues 182–327 enclose the KARI C-terminal knotted domain; sequence SFKEETETDL…AKLRAMMPWI (146 aa). Positions 190, 194, 226, and 230 each coordinate Mg(2+). Substrate is bound at residue Ser-251.

This sequence belongs to the ketol-acid reductoisomerase family. It depends on Mg(2+) as a cofactor.

The catalysed reaction is (2R)-2,3-dihydroxy-3-methylbutanoate + NADP(+) = (2S)-2-acetolactate + NADPH + H(+). It carries out the reaction (2R,3R)-2,3-dihydroxy-3-methylpentanoate + NADP(+) = (S)-2-ethyl-2-hydroxy-3-oxobutanoate + NADPH + H(+). Its pathway is amino-acid biosynthesis; L-isoleucine biosynthesis; L-isoleucine from 2-oxobutanoate: step 2/4. It participates in amino-acid biosynthesis; L-valine biosynthesis; L-valine from pyruvate: step 2/4. In terms of biological role, involved in the biosynthesis of branched-chain amino acids (BCAA). Catalyzes an alkyl-migration followed by a ketol-acid reduction of (S)-2-acetolactate (S2AL) to yield (R)-2,3-dihydroxy-isovalerate. In the isomerase reaction, S2AL is rearranged via a Mg-dependent methyl migration to produce 3-hydroxy-3-methyl-2-ketobutyrate (HMKB). In the reductase reaction, this 2-ketoacid undergoes a metal-dependent reduction by NADPH to yield (R)-2,3-dihydroxy-isovalerate. The polypeptide is Ketol-acid reductoisomerase (NADP(+)) (Magnetococcus marinus (strain ATCC BAA-1437 / JCM 17883 / MC-1)).